Consider the following 132-residue polypeptide: Holo-[acyl-carrier-protein] synthase (132 aa).

Asp-8 and Glu-57 together coordinate Mg(2+).

The protein belongs to the P-Pant transferase superfamily. AcpS family. Mg(2+) is required as a cofactor.

The protein resides in the cytoplasm. It catalyses the reaction apo-[ACP] + CoA = holo-[ACP] + adenosine 3',5'-bisphosphate + H(+). Functionally, transfers the 4'-phosphopantetheine moiety from coenzyme A to a Ser of acyl-carrier-protein. The sequence is that of Holo-[acyl-carrier-protein] synthase from Methylobacterium nodulans (strain LMG 21967 / CNCM I-2342 / ORS 2060).